Reading from the N-terminus, the 259-residue chain is Eukaryotic translation initiation factor 3 subunit J (259 aa).

Over residues 1–12 (MAAAAAAAAGDS) the composition is skewed to low complexity. Positions 1-70 (MAAAAAAAAG…KEEAEVKPEV (70 aa)) are sufficient for interaction with EIF3B. Positions 1 to 111 (MAAAAAAAAG…EPEEPKVLTP (111 aa)) are disordered. Phosphoserine is present on residues serine 12, serine 14, and serine 21. Residues 41-60 (EGEDEDEDVKDNWDDDDDEK) are compositionally biased toward acidic residues. Basic and acidic residues predominate over residues 61–107 (KEEAEVKPEVKISEKKKIAEKIKEKERQQKKRQEEIKKRLEEPEEPK). A coiled-coil region spans residues 71–136 (KISEKKKIAE…ESDLELAKET (66 aa)). Lysine 107 is covalently cross-linked (Glycyl lysine isopeptide (Lys-Gly) (interchain with G-Cter in SUMO2)). Threonine 110 is subject to Phosphothreonine. The residue at position 128 (serine 128) is a Phosphoserine. Residues 218-247 (SKAKKKKKGVVPGGGLKATMKDDLADYGGY) form a disordered region. The tract at residues 244–259 (YGGYDGGYVQDYEDFM) is promotes stable association with the 40S ribosome. The residue at position 255 (tyrosine 255) is a Phosphotyrosine.

The protein belongs to the eIF-3 subunit J family. In terms of assembly, component of the eukaryotic translation initiation factor 3 (eIF-3) complex, which is composed of 13 subunits: EIF3A, EIF3B, EIF3C, EIF3D, EIF3E, EIF3F, EIF3G, EIF3H, EIF3I, EIF3J, EIF3K, EIF3L and EIF3M. The eIF-3 complex appears to include 3 stable modules: module A is composed of EIF3A, EIF3B, EIF3G and EIF3I; module B is composed of EIF3F, EIF3H, and EIF3M; and module C is composed of EIF3C, EIF3D, EIF3E, EIF3K and EIF3L. EIF3C of module C binds EIF3B of module A and EIF3H of module B, thereby linking the three modules. EIF3J is a labile subunit that binds to the eIF-3 complex via EIF3B. The eIF-3 complex interacts with RPS6KB1 under conditions of nutrient depletion. Mitogenic stimulation leads to binding and activation of a complex composed of MTOR and RPTOR, leading to phosphorylation and release of RPS6KB1 and binding of EIF4B to eIF-3. Post-translationally, phosphorylated. Phosphorylation is enhanced upon serum stimulation.

It localises to the cytoplasm. Its function is as follows. Component of the eukaryotic translation initiation factor 3 (eIF-3) complex, which is required for several steps in the initiation of protein synthesis. The eIF-3 complex associates with the 40S ribosome and facilitates the recruitment of eIF-1, eIF-1A, eIF-2:GTP:methionyl-tRNAi and eIF-5 to form the 43S pre-initiation complex (43S PIC). The eIF-3 complex stimulates mRNA recruitment to the 43S PIC and scanning of the mRNA for AUG recognition. The eIF-3 complex is also required for disassembly and recycling of post-termination ribosomal complexes and subsequently prevents premature joining of the 40S and 60S ribosomal subunits prior to initiation. The eIF-3 complex specifically targets and initiates translation of a subset of mRNAs involved in cell proliferation, including cell cycling, differentiation and apoptosis, and uses different modes of RNA stem-loop binding to exert either translational activation or repression. This subunit binds directly within the mRNA entry channel of the 40S ribosome to the aminoacyl (A) site. It may regulate the interaction between the 43S PIC and mRNA. In Pongo abelii (Sumatran orangutan), this protein is Eukaryotic translation initiation factor 3 subunit J.